Consider the following 428-residue polypeptide: Enolase (428 aa).

A (2R)-2-phosphoglycerate-binding site is contributed by glutamine 163. Residue glutamate 205 is the Proton donor of the active site. Aspartate 242, glutamate 286, and aspartate 313 together coordinate Mg(2+). (2R)-2-phosphoglycerate is bound by residues lysine 338, arginine 367, serine 368, and lysine 389. The Proton acceptor role is filled by lysine 338.

This sequence belongs to the enolase family. Mg(2+) is required as a cofactor.

The protein localises to the cytoplasm. It localises to the secreted. It is found in the cell surface. The catalysed reaction is (2R)-2-phosphoglycerate = phosphoenolpyruvate + H2O. Its pathway is carbohydrate degradation; glycolysis; pyruvate from D-glyceraldehyde 3-phosphate: step 4/5. Catalyzes the reversible conversion of 2-phosphoglycerate (2-PG) into phosphoenolpyruvate (PEP). It is essential for the degradation of carbohydrates via glycolysis. In Bordetella avium (strain 197N), this protein is Enolase.